We begin with the raw amino-acid sequence, 429 residues long: Histidine--tRNA ligase (429 aa).

The protein belongs to the class-II aminoacyl-tRNA synthetase family. Homodimer.

The protein localises to the cytoplasm. It catalyses the reaction tRNA(His) + L-histidine + ATP = L-histidyl-tRNA(His) + AMP + diphosphate + H(+). This chain is Histidine--tRNA ligase, found in Streptococcus pneumoniae (strain JJA).